Reading from the N-terminus, the 93-residue chain is Large ribosomal subunit protein uL23 (93 aa).

Belongs to the universal ribosomal protein uL23 family. As to quaternary structure, part of the 50S ribosomal subunit. Contacts protein L29, and trigger factor when it is bound to the ribosome.

Functionally, one of the early assembly proteins it binds 23S rRNA. One of the proteins that surrounds the polypeptide exit tunnel on the outside of the ribosome. Forms the main docking site for trigger factor binding to the ribosome. This is Large ribosomal subunit protein uL23 from Wolinella succinogenes (strain ATCC 29543 / DSM 1740 / CCUG 13145 / JCM 31913 / LMG 7466 / NCTC 11488 / FDC 602W) (Vibrio succinogenes).